We begin with the raw amino-acid sequence, 465 residues long: Innexin-11 (465 aa).

Helical transmembrane passes span 29-49 (LMTP…QFGG), 105-125 (QWVP…SYLW), 195-215 (SGFI…NVFA), and 286-306 (IFVL…VSLV). The interval 433–465 (ISTSLMPDKDDIESSSTSSEEDQKRVSNVITNI) is disordered.

This sequence belongs to the pannexin family.

Its subcellular location is the cell membrane. It is found in the cell junction. The protein resides in the gap junction. Functionally, structural component of the gap junctions. The protein is Innexin-11 (inx-11) of Caenorhabditis elegans.